The primary structure comprises 296 residues: Bifunctional protein FolD (296 aa).

NADP(+)-binding positions include 166–168 (GRS), S191, and I232.

Belongs to the tetrahydrofolate dehydrogenase/cyclohydrolase family. In terms of assembly, homodimer.

It catalyses the reaction (6R)-5,10-methylene-5,6,7,8-tetrahydrofolate + NADP(+) = (6R)-5,10-methenyltetrahydrofolate + NADPH. It carries out the reaction (6R)-5,10-methenyltetrahydrofolate + H2O = (6R)-10-formyltetrahydrofolate + H(+). It participates in one-carbon metabolism; tetrahydrofolate interconversion. Functionally, catalyzes the oxidation of 5,10-methylenetetrahydrofolate to 5,10-methenyltetrahydrofolate and then the hydrolysis of 5,10-methenyltetrahydrofolate to 10-formyltetrahydrofolate. This chain is Bifunctional protein FolD, found in Cereibacter sphaeroides (strain ATCC 17025 / ATH 2.4.3) (Rhodobacter sphaeroides).